A 362-amino-acid chain; its full sequence is Methylthioribose-1-phosphate isomerase (362 aa).

Asp252 functions as the Proton donor in the catalytic mechanism.

The protein belongs to the eIF-2B alpha/beta/delta subunits family. MtnA subfamily.

It localises to the cytoplasm. It is found in the nucleus. It carries out the reaction 5-(methylsulfanyl)-alpha-D-ribose 1-phosphate = 5-(methylsulfanyl)-D-ribulose 1-phosphate. The protein operates within amino-acid biosynthesis; L-methionine biosynthesis via salvage pathway; L-methionine from S-methyl-5-thio-alpha-D-ribose 1-phosphate: step 1/6. In terms of biological role, catalyzes the interconversion of methylthioribose-1-phosphate (MTR-1-P) into methylthioribulose-1-phosphate (MTRu-1-P). This chain is Methylthioribose-1-phosphate isomerase, found in Drosophila pseudoobscura pseudoobscura (Fruit fly).